Here is a 347-residue protein sequence, read N- to C-terminus: MNPLIMTTILTTVILGTLIVMMSSHWLLIWIGFEMNMLAIIPMLMKQHNPRSTEAATKYFFTQATASMLLMLAVLLNLMYSGQWTVMKLYNPTASMIMTMALTMKLGLAPFHFWVPEVTQGIPLSSGLILLTWQKLAPLTVLYTISPNINLTMLLTMSIASIAIGGWGGLNQTQLRKIMAYSSIAHMGWMTTILIYNPTMTLLNLVIYILMTTTMFMLFMTSSSTTTLSLSHMWNKTPMIVTITLATLLSLGGLPPLTGFMPKWMIIQELTKNNNIILPTIMAITALLNLFFYMRLTYATSLTMFPTTNNMKIKWQFENPKRLSLLTPMIVLSTLTLPPTPMIIILN.

10 consecutive transmembrane segments (helical) span residues 13–33 (VILG…WIGF), 59–79 (YFFT…LNLM), 96–116 (MIMT…FWVP), 122–142 (IPLS…LTVL), 149–169 (INLT…GWGG), 178–198 (IMAY…IYNP), 200–220 (MTLL…MLFM), 240–260 (IVTI…LTGF), 276–296 (IILP…YMRL), and 325–345 (LLTP…MIII).

This sequence belongs to the complex I subunit 2 family. Core subunit of respiratory chain NADH dehydrogenase (Complex I) which is composed of 45 different subunits. Interacts with TMEM242.

The protein resides in the mitochondrion inner membrane. It carries out the reaction a ubiquinone + NADH + 5 H(+)(in) = a ubiquinol + NAD(+) + 4 H(+)(out). Functionally, core subunit of the mitochondrial membrane respiratory chain NADH dehydrogenase (Complex I) which catalyzes electron transfer from NADH through the respiratory chain, using ubiquinone as an electron acceptor. Essential for the catalytic activity and assembly of complex I. In Molossus ater (Black mastiff bat), this protein is NADH-ubiquinone oxidoreductase chain 2.